A 467-amino-acid chain; its full sequence is ATP synthase subunit beta (467 aa).

Gly-150–Thr-157 serves as a coordination point for ATP.

This sequence belongs to the ATPase alpha/beta chains family. F-type ATPases have 2 components, CF(1) - the catalytic core - and CF(0) - the membrane proton channel. CF(1) has five subunits: alpha(3), beta(3), gamma(1), delta(1), epsilon(1). CF(0) has three main subunits: a(1), b(2) and c(9-12). The alpha and beta chains form an alternating ring which encloses part of the gamma chain. CF(1) is attached to CF(0) by a central stalk formed by the gamma and epsilon chains, while a peripheral stalk is formed by the delta and b chains.

It is found in the cell inner membrane. The enzyme catalyses ATP + H2O + 4 H(+)(in) = ADP + phosphate + 5 H(+)(out). In terms of biological role, produces ATP from ADP in the presence of a proton gradient across the membrane. The catalytic sites are hosted primarily by the beta subunits. This chain is ATP synthase subunit beta, found in Polaromonas sp. (strain JS666 / ATCC BAA-500).